The primary structure comprises 76 residues: Translational regulator CsrA (76 aa).

The protein belongs to the CsrA/RsmA family. In terms of assembly, homodimer; the beta-strands of each monomer intercalate to form a hydrophobic core, while the alpha-helices form wings that extend away from the core.

Its subcellular location is the cytoplasm. In terms of biological role, a translational regulator that binds mRNA to regulate translation initiation and/or mRNA stability. Usually binds in the 5'-UTR at or near the Shine-Dalgarno sequence preventing ribosome-binding, thus repressing translation. Its main target seems to be the major flagellin gene, while its function is anatagonized by FliW. This chain is Translational regulator CsrA, found in Helicobacter pylori (strain J99 / ATCC 700824) (Campylobacter pylori J99).